The chain runs to 166 residues: 16S rRNA aminocarboxypropyltransferase (166 aa).

5 residues coordinate S-adenosyl-L-methionine: Thr-17, Val-62, Ile-84, Tyr-99, and Ser-103.

It belongs to the TDD superfamily. TSR3 family.

The protein localises to the cytoplasm. It catalyses the reaction an N(1)-methylpseudouridine in rRNA + S-adenosyl-L-methionine = N(1)-methyl-N(3)-[(3S)-3-amino-3-carboxypropyl]pseudouridine in rRNA + S-methyl-5'-thioadenosine + H(+). Functionally, aminocarboxypropyltransferase that catalyzes the aminocarboxypropyl transfer on pseudouridine corresponding to position 914 in M.jannaschii 16S rRNA. It constitutes the last step in biosynthesis of the hypermodified N1-methyl-N3-(3-amino-3-carboxypropyl) pseudouridine (m1acp3-Psi). This is 16S rRNA aminocarboxypropyltransferase from Saccharolobus solfataricus (strain ATCC 35092 / DSM 1617 / JCM 11322 / P2) (Sulfolobus solfataricus).